Consider the following 225-residue polypeptide: Membrane protein (225 aa).

Topologically, residues 1–20 (MSNETNCTLDFEQSVELFKE) are virion surface. The helical transmembrane segment at 21–41 (YNLFITAFLLFLTIILQYGYA) threads the bilayer. The Intravirion segment spans residues 42 to 51 (TRSKFIYILK). Residues 52-72 (MIVLWCFWPLNIAVGVISCIY) form a helical membrane-spanning segment. The Virion surface portion of the chain corresponds to 73 to 77 (PPNTG). Residues 78-98 (GLVAAIILTVFACLSFVGYWI) form a helical membrane-spanning segment. Residues 99 to 225 (QSIRLFKRCR…VATGGSSLYT (127 aa)) are Intravirion-facing.

Belongs to the gammacoronaviruses M protein family. As to quaternary structure, homomultimer. Interacts with envelope E protein in the budding compartment of the host cell, which is located between endoplasmic reticulum and the Golgi complex. Forms a complex with HE and S proteins. Interacts with nucleocapsid N protein. This interaction probably participates in RNA packaging into the virus.

The protein resides in the virion membrane. It is found in the host Golgi apparatus membrane. In terms of biological role, component of the viral envelope that plays a central role in virus morphogenesis and assembly via its interactions with other viral proteins. This is Membrane protein from Gallus gallus (Chicken).